Here is a 168-residue protein sequence, read N- to C-terminus: Alpha-N-acetylgalactosamine-specific lectin (168 aa).

A signal peptide spans 1 to 18 (MAFFRALCFVLLVGFAAA). The 126-residue stretch at 38 to 163 (YNGNCYRYFG…CSRAFAYVCK (126 aa)) folds into the C-type lectin domain. 2 disulfides stabilise this stretch: C59–C162 and C136–C154.

As to quaternary structure, monomer, homodimer and homooligomer.

In terms of biological role, alpha-N-acetylgalactosamine-specific lectin. The oligomeric form has Ca(2+)-dependent hemagglutination activity towards sheep erythrocytes. Its hemagglutination activity is inhibited by various monosaccharides, oligosaccharides and glycopeptides, including inhibition by GalNAc, blood group A trisaccharide, Tn antigen, mucin and asialomucin. In Patiria pectinifera (Starfish), this protein is Alpha-N-acetylgalactosamine-specific lectin.